Here is a 494-residue protein sequence, read N- to C-terminus: Guanosine-5'-triphosphate,3'-diphosphate pyrophosphatase (494 aa).

This sequence belongs to the GppA/Ppx family. GppA subfamily.

It catalyses the reaction guanosine 3'-diphosphate 5'-triphosphate + H2O = guanosine 3',5'-bis(diphosphate) + phosphate + H(+). It functions in the pathway purine metabolism; ppGpp biosynthesis; ppGpp from GTP: step 2/2. Catalyzes the conversion of pppGpp to ppGpp. Guanosine pentaphosphate (pppGpp) is a cytoplasmic signaling molecule which together with ppGpp controls the 'stringent response', an adaptive process that allows bacteria to respond to amino acid starvation, resulting in the coordinated regulation of numerous cellular activities. In Shigella sonnei (strain Ss046), this protein is Guanosine-5'-triphosphate,3'-diphosphate pyrophosphatase.